A 382-amino-acid polypeptide reads, in one-letter code: 4-hydroxybutyrate dehydrogenase (382 aa).

NAD(+) is bound by residues Asp37, Asn67, 94–98 (GSSID), 138–142 (TTSGT), and Lys159. Fe cation contacts are provided by Asp193, His197, His261, and His280. His280 is an NAD(+) binding site.

Belongs to the iron-containing alcohol dehydrogenase family. Requires Fe cation as cofactor.

It carries out the reaction 4-hydroxybutanoate + NAD(+) = succinate semialdehyde + NADH + H(+). Shows competitive inhibition of GHBDH activity by the product succinic semialdehyde, and non-competitive inhibitions by the three other substrate-product combinations. The conversion of GHB to SSA is activated by two different saturating purified nudix hydrolases, B.methanolicus activator ACT and E.coli NudF. The nudix hydrolases do not activate the reverse reaction. Functionally, involved in the degradation of 4-hydroxybutyrate. Catalyzes the interconversion of gamma-hydroxybutyrate (GHB) and succinic semialdehyde (SSA). The chain is 4-hydroxybutyrate dehydrogenase from Cupriavidus necator (Alcaligenes eutrophus).